Here is a 296-residue protein sequence, read N- to C-terminus: uncharacterized protein (296 aa).

CBS domains lie at 176–232 (GIKE…DKKV) and 236–292 (MRRD…KFPE).

This is an uncharacterized protein from Methanocaldococcus jannaschii (strain ATCC 43067 / DSM 2661 / JAL-1 / JCM 10045 / NBRC 100440) (Methanococcus jannaschii).